The following is a 269-amino-acid chain: Energy-coupling factor transporter ATP-binding protein EcfA1 (269 aa).

Positions 8–242 (IVFKNVSFQY…AEELTTIGLD (235 aa)) constitute an ABC transporter domain. 42-49 (GHNGSGKS) is an ATP binding site.

The protein belongs to the ABC transporter superfamily. Energy-coupling factor EcfA family. Forms a stable energy-coupling factor (ECF) transporter complex composed of 2 membrane-embedded substrate-binding proteins (S component), 2 ATP-binding proteins (A component) and 2 transmembrane proteins (T component).

It is found in the cell membrane. Its function is as follows. ATP-binding (A) component of a common energy-coupling factor (ECF) ABC-transporter complex. Unlike classic ABC transporters this ECF transporter provides the energy necessary to transport a number of different substrates. The protein is Energy-coupling factor transporter ATP-binding protein EcfA1 of Staphylococcus aureus (strain MRSA252).